Reading from the N-terminus, the 56-residue chain is Ribosome biogenesis protein Nop10 (56 aa).

Belongs to the NOP10 family.

In terms of biological role, involved in ribosome biogenesis; more specifically in 18S rRNA pseudouridylation and in cleavage of pre-rRNA. The sequence is that of Ribosome biogenesis protein Nop10 from Methanococcoides burtonii (strain DSM 6242 / NBRC 107633 / OCM 468 / ACE-M).